We begin with the raw amino-acid sequence, 434 residues long: Tol-Pal system protein TolB (434 aa).

Residues 1-21 (MIVRRALALAALALAASPALA) form the signal peptide. Positions 411–434 (GDRQTPVTSGKTDLAAPAWGPLAP) are disordered.

Belongs to the TolB family. The Tol-Pal system is composed of five core proteins: the inner membrane proteins TolA, TolQ and TolR, the periplasmic protein TolB and the outer membrane protein Pal. They form a network linking the inner and outer membranes and the peptidoglycan layer.

The protein localises to the periplasm. Functionally, part of the Tol-Pal system, which plays a role in outer membrane invagination during cell division and is important for maintaining outer membrane integrity. The chain is Tol-Pal system protein TolB from Anaeromyxobacter sp. (strain K).